A 273-amino-acid chain; its full sequence is Transposable element Tcb1 transposase (273 aa).

The protein belongs to the transposase 5 family.

It is found in the nucleus. Functionally, probably essential for transposable element Tcb1 transposition. The insertion of Tcb1 is the main cause of spontaneous mutations. This is Transposable element Tcb1 transposase from Caenorhabditis briggsae.